A 253-amino-acid chain; its full sequence is 3-deoxy-manno-octulosonate cytidylyltransferase (253 aa).

It belongs to the KdsB family.

It localises to the cytoplasm. The enzyme catalyses 3-deoxy-alpha-D-manno-oct-2-ulosonate + CTP = CMP-3-deoxy-beta-D-manno-octulosonate + diphosphate. It participates in nucleotide-sugar biosynthesis; CMP-3-deoxy-D-manno-octulosonate biosynthesis; CMP-3-deoxy-D-manno-octulosonate from 3-deoxy-D-manno-octulosonate and CTP: step 1/1. The protein operates within bacterial outer membrane biogenesis; lipopolysaccharide biosynthesis. Activates KDO (a required 8-carbon sugar) for incorporation into bacterial lipopolysaccharide in Gram-negative bacteria. The polypeptide is 3-deoxy-manno-octulosonate cytidylyltransferase (Neisseria meningitidis serogroup C / serotype 2a (strain ATCC 700532 / DSM 15464 / FAM18)).